The primary structure comprises 402 residues: Calcium-responsive transactivator (402 aa).

Positions 1–148 are N-terminal auto-inhibitory domain; necessary for interaction with SMARCA4/BRG1; the sequence is MSVAFASARP…TLPTTSMSLS (148 aa). The short motif at 50–53 is the SH2-binding element; sequence YQQI. Disordered regions lie at residues 72-171 and 221-402; these read QSLL…VPMQ and AMMG…NYQQ. The segment covering 85–106 has biased composition (low complexity); the sequence is LGPGALSQSGSSQGLHPQGSLS. 2 stretches are compositionally biased toward polar residues: residues 128–149 and 161–171; these read NHVS…SLSG and SGPTSQSVPMQ. The tract at residues 149–238 is methionine-rich intra-molecular domain; that stretch reads GSGHGTGPGY…GGSMMGQRPM (90 aa). Residues 233 to 251 are compositionally biased toward low complexity; it reads MGQRPMAPYRPSQQGSSQQ. Residues 252 to 323 form an MFD domain region; sequence YLGQEEYYSE…SQYSQQQAGY (72 aa). The span at 261-277 shows a compositional bias: polar residues; it reads EQYSHSQGSAEPMSQQY. The segment covering 296-305 has biased composition (basic and acidic residues); sequence SYDRSFEDPT. Residues 311–375 are compositionally biased toward low complexity; sequence GGNSQYSQQQ…QGQGQQYGSY (65 aa). The necessary for nuclear localization stretch occupies residues 340 to 402; it reads NQQSYPGQQQ…EQGQYGNYQQ (63 aa). The short motif at 359–362 is the SH2-binding element; sequence SQYS. Over residues 376–388 the composition is skewed to polar residues; the sequence is RTSQTGPSAQQQR. Residues 377–385 carry the SH3-binding motif; sequence TSQTGPSAQ. The segment covering 390–402 has biased composition (low complexity); sequence YGYEQGQYGNYQQ. The necessary for interaction with CREBBP and for the recruitment of CREBBP to the nuclear bodies stretch occupies residues 393-402; it reads EQGQYGNYQQ. Residues 397–400 carry the SH2-binding motif; it reads YGNY.

The protein belongs to the SS18 family. In terms of assembly, homodimer. Dimerization may be necessary for its function in neuronal dendritic development. Interacts (via C-terminus) with CREBBP (via N-terminus), EP300 and SMARCA4/BRG1. Interacts with the nBAF complex. Association with CREBBP facilitates transcription while the association with SMARCA4/BRG1 suppresses CREST-mediated transcription in resting neurons.

The protein localises to the nucleus. Its subcellular location is the chromosome. It is found in the centromere. It localises to the kinetochore. Functionally, transcriptional activator which is required for calcium-dependent dendritic growth and branching in cortical neurons. Recruits CREB-binding protein (CREBBP) to nuclear bodies. Component of the CREST-BRG1 complex, a multiprotein complex that regulates promoter activation by orchestrating a calcium-dependent release of a repressor complex and a recruitment of an activator complex. In resting neurons, transcription of the c-FOS promoter is inhibited by BRG1-dependent recruitment of a phospho-RB1-HDAC1 repressor complex. Upon calcium influx, RB1 is dephosphorylated by calcineurin, which leads to release of the repressor complex. At the same time, there is increased recruitment of CREBBP to the promoter by a CREST-dependent mechanism, which leads to transcriptional activation. The CREST-BRG1 complex also binds to the NR2B promoter, and activity-dependent induction of NR2B expression involves a release of HDAC1 and recruitment of CREBBP. This chain is Calcium-responsive transactivator (Ss18l1), found in Mus musculus (Mouse).